Here is a 122-residue protein sequence, read N- to C-terminus: MIRPQTRLKVADNTGAKEIMCIRLLGGSNRKYSNVGDIIVASVKSATPGGVVKKGEVVKAVIVRTKKGIARKDGTYIRFDDNAAVIIRDDKQPRGTRIFGPVARELRDKDFMKIISLAPEVL.

It belongs to the universal ribosomal protein uL14 family. As to quaternary structure, part of the 50S ribosomal subunit. Forms a cluster with proteins L3 and L19. In the 70S ribosome, L14 and L19 interact and together make contacts with the 16S rRNA in bridges B5 and B8.

Its function is as follows. Binds to 23S rRNA. Forms part of two intersubunit bridges in the 70S ribosome. This is Large ribosomal subunit protein uL14 from Caldanaerobacter subterraneus subsp. tengcongensis (strain DSM 15242 / JCM 11007 / NBRC 100824 / MB4) (Thermoanaerobacter tengcongensis).